The sequence spans 435 residues: Glutamate-1-semialdehyde 2,1-aminomutase (435 aa).

Lys266 is modified (N6-(pyridoxal phosphate)lysine).

It belongs to the class-III pyridoxal-phosphate-dependent aminotransferase family. HemL subfamily. As to quaternary structure, homodimer. The cofactor is pyridoxal 5'-phosphate.

It localises to the cytoplasm. The enzyme catalyses (S)-4-amino-5-oxopentanoate = 5-aminolevulinate. The protein operates within porphyrin-containing compound metabolism; protoporphyrin-IX biosynthesis; 5-aminolevulinate from L-glutamyl-tRNA(Glu): step 2/2. This is Glutamate-1-semialdehyde 2,1-aminomutase from Coxiella burnetii (strain Dugway 5J108-111).